We begin with the raw amino-acid sequence, 464 residues long: Protein VAPYRIN-LIKE (464 aa).

In terms of domain architecture, MSP spans 3 to 124 (RLVKTEFNEV…RDAVITVILV (122 aa)). ANK repeat units follow at residues 153 to 182 (NLTNLMKPAVESGKVEYVTDLITAGGDVNF), 186 to 215 (NGKSLIPFAIRTGKLAVLKLLVANGCRIND), 217 to 246 (VDFVLHEAAIIDRVDVVKFLFESFCDELDV), 252 to 281 (EMMTPIHVSASEGHVSLIEFFVSIGGNANA), 285 to 314 (RRWTPLHHAASRNHLKAVEFLLENSDVKYA), 318 to 347 (NGKTAFEIASESGHTRLFGVLRWGDALLQA), 349 to 368 (RVDDVHALKKCLGEGAEVNR), 372 to 401 (NGWTPLHWASFKGRIKSVKVLLEHGAEVDS), and 405 to 435 (AGYTPLHCAAEAGHLQVALVLIAHGGCQTNL).

Expressed in roots.

It is found in the cytoplasm. Its subcellular location is the nucleus. It localises to the cell membrane. In terms of biological role, may be involved in arbuscular mycorrhizal (AM) symbiosis with AM fungi and in nitrogen-fixing rhizobial bacteria symbiosis leading to the formation of root nodules. This chain is Protein VAPYRIN-LIKE, found in Medicago truncatula (Barrel medic).